Consider the following 296-residue polypeptide: NAD kinase (296 aa).

The active-site Proton acceptor is the Asp78. NAD(+) is bound by residues 78-79 (DG), 152-153 (ND), Arg180, Asp182, and Gln251.

Belongs to the NAD kinase family. A divalent metal cation serves as cofactor.

The protein localises to the cytoplasm. The catalysed reaction is NAD(+) + ATP = ADP + NADP(+) + H(+). Its function is as follows. Involved in the regulation of the intracellular balance of NAD and NADP, and is a key enzyme in the biosynthesis of NADP. Catalyzes specifically the phosphorylation on 2'-hydroxyl of the adenosine moiety of NAD to yield NADP. In Neisseria gonorrhoeae (strain ATCC 700825 / FA 1090), this protein is NAD kinase.